Consider the following 256-residue polypeptide: MAAKPGAATPTYSPKIVGRSRLPIFKDSDLDWSRPDGRGFHQCRPALLQTGAVSSASGSAYAEFGNTKVIVSVFGPRESKKAMVYSDVGRLNCNVSYTNFASPTLGQGTDHKEYSSMLHKALEGVIMMETFPKTTVDVFALVLESGGSDLSVLISCASLALADAGIMMYDLITAVSVSCIGKSLMIDPVTEEEGCEDGSFMMTCMPSRYEITQLTITGEWTTPNINEAMQLCLDASSKLGEIMRDCLKQSASASDE.

The protein belongs to the RNase PH family. In terms of assembly, probable component of the RNA exosome complex. In terms of tissue distribution, highly expressed in imbibed seeds and young seedlings.

It localises to the cytoplasm. The protein localises to the nucleus. Its function is as follows. Non-catalytic component of the RNA exosome complex which has 3'-&gt;5' exoribonuclease activity and participates in a multitude of cellular RNA processing, maturation and degradation events. In vitro, is a processive phosphorolytic exonuclease and requires a single-stranded poly(A) tail on the substrate RNA for its activity. Plays an important role in seed germination and early seedling growth by mediating specific cytoplasmic mRNA decay of transcripts coding for the abscisic acid (ABA) biosynthetic enzymes NCED5 and NCED6, and the ABA signaling transcription factors ABI3 and ABI4. The chain is Exosome complex component RRP41-like from Arabidopsis thaliana (Mouse-ear cress).